Consider the following 236-residue polypeptide: Uridylate kinase (236 aa).

10 to 13 (KLSG) provides a ligand contact to ATP. UMP is bound at residue Gly52. The ATP site is built by Gly53 and Arg57. UMP-binding positions include Asp72 and 133–140 (TGNPFFTT). ATP is bound by residues Thr160, Tyr166, and Asp169.

It belongs to the UMP kinase family. In terms of assembly, homohexamer.

The protein localises to the cytoplasm. It carries out the reaction UMP + ATP = UDP + ADP. It participates in pyrimidine metabolism; CTP biosynthesis via de novo pathway; UDP from UMP (UMPK route): step 1/1. Its activity is regulated as follows. Inhibited by UTP. Functionally, catalyzes the reversible phosphorylation of UMP to UDP. The polypeptide is Uridylate kinase (Bacteroides thetaiotaomicron (strain ATCC 29148 / DSM 2079 / JCM 5827 / CCUG 10774 / NCTC 10582 / VPI-5482 / E50)).